Reading from the N-terminus, the 423-residue chain is Putative competence-damage inducible protein (423 aa).

The protein belongs to the CinA family.

The protein is Putative competence-damage inducible protein of Streptococcus pyogenes serotype M2 (strain MGAS10270).